A 224-amino-acid chain; its full sequence is uncharacterized protein (224 aa).

This is an uncharacterized protein from Bacillus anthracis.